Here is a 61-residue protein sequence, read N- to C-terminus: Large ribosomal subunit protein bL32 (61 aa).

Basic residues predominate over residues 1-16 (MAVPKRKTSPSKRGMR). Residues 1–40 (MAVPKRKTSPSKRGMRRSADALKAPTYIEDKNSGELRRPH) form a disordered region. Basic and acidic residues predominate over residues 28 to 40 (IEDKNSGELRRPH).

Belongs to the bacterial ribosomal protein bL32 family.

The chain is Large ribosomal subunit protein bL32 from Sinorhizobium medicae (strain WSM419) (Ensifer medicae).